Here is a 437-residue protein sequence, read N- to C-terminus: MKVYIETMGCAMNSRDSEHLLSELSKLDYKETSDPKMADLILINTCSVREKPERKLFSEIGQFAKIKKPNAKIGVCGCTASHMGADILKKAPSVSFVLGARNVSKISQVIHKEKAVEVAIDYDESAYAFEFFEKKAQIRSLLNISIGCDKKCAYCIVPHTRGKEISIPMDLILKEAEKLANNGTKELMLLGQNVNNYGVRFSSEHAKVGFSDLLDKLSEIQGIERIRFTSPHPLHMNDAFLERFAQNPKVCKSIHMPLQSGSSAVLKMMRRGYSKEWFLNRVERLKALVPEVGISTDIIVGFPNESDKDFEDTMEVLEKVRFDTLYSFIYSPRPFTEAGAWKERVPLEISSLRLERLQNRHKEILEEKAKLEVGKTHVVLVENRREMDGQIVGFEGRSDTGKFIEVTCKEKKNPGELVRVEIISHSKGRLMATTKGN.

Positions 1–115 (MKVYIETMGC…ISQVIHKEKA (115 aa)) constitute an MTTase N-terminal domain. [4Fe-4S] cluster contacts are provided by cysteine 10, cysteine 46, cysteine 78, cysteine 148, cysteine 152, and cysteine 155. The Radical SAM core domain occupies 134 to 367 (KKAQIRSLLN…QNRHKEILEE (234 aa)). The region spanning 370-436 (KLEVGKTHVV…KGRLMATTKG (67 aa)) is the TRAM domain.

The protein belongs to the methylthiotransferase family. MiaB subfamily. As to quaternary structure, monomer. It depends on [4Fe-4S] cluster as a cofactor.

It localises to the cytoplasm. The enzyme catalyses N(6)-dimethylallyladenosine(37) in tRNA + (sulfur carrier)-SH + AH2 + 2 S-adenosyl-L-methionine = 2-methylsulfanyl-N(6)-dimethylallyladenosine(37) in tRNA + (sulfur carrier)-H + 5'-deoxyadenosine + L-methionine + A + S-adenosyl-L-homocysteine + 2 H(+). Functionally, catalyzes the methylthiolation of N6-(dimethylallyl)adenosine (i(6)A), leading to the formation of 2-methylthio-N6-(dimethylallyl)adenosine (ms(2)i(6)A) at position 37 in tRNAs that read codons beginning with uridine. This Helicobacter pylori (strain J99 / ATCC 700824) (Campylobacter pylori J99) protein is tRNA-2-methylthio-N(6)-dimethylallyladenosine synthase.